Consider the following 829-residue polypeptide: Probable receptor-like protein kinase At5g59700 (829 aa).

A signal peptide spans 1–24; the sequence is MGGEKFGFLIWILSIPCLIFLCYG. Residues 25–406 lie on the Extracellular side of the membrane; that stretch reads YVPVDNYLIN…SSTTKKNVGM (382 aa). 4 N-linked (GlcNAc...) asparagine glycosylation sites follow: asparagine 40, asparagine 216, asparagine 279, and asparagine 380. A helical membrane pass occupies residues 407 to 427; that stretch reads IIGLTIGSLLALVVLGGFFVL. Residues 428–829 lie on the Cytoplasmic side of the membrane; sequence YKKRGRDQDG…FSQLIKSEGR (402 aa). Residues 482-755 enclose the Protein kinase domain; sequence FDENRAIGVG…GDVLWNLEYA (274 aa). Residues 488 to 496 and lysine 510 contribute to the ATP site; that span reads IGVGGFGKV. Catalysis depends on aspartate 606, which acts as the Proton acceptor.

It belongs to the protein kinase superfamily. Ser/Thr protein kinase family.

It localises to the cell membrane. The protein is Probable receptor-like protein kinase At5g59700 of Arabidopsis thaliana (Mouse-ear cress).